Reading from the N-terminus, the 419-residue chain is Epothilone C/D epoxidase (419 aa).

2 residues coordinate substrate: Ala180 and Gly304. Cys365 serves as a coordination point for heme.

This sequence belongs to the cytochrome P450 family. The cofactor is heme.

It catalyses the reaction epothilone C + 2 reduced [2Fe-2S]-[ferredoxin] + O2 + 2 H(+) = epothilone A + 2 oxidized [2Fe-2S]-[ferredoxin] + H2O. It carries out the reaction epothilone D + 2 reduced [2Fe-2S]-[ferredoxin] + O2 + 2 H(+) = epothilone B + 2 oxidized [2Fe-2S]-[ferredoxin] + H2O. The protein operates within secondary metabolite biosynthesis; epothilone biosynthesis. Functionally, involved in the biosynthesis of epothilones, macrolactones which have a narrow anti-fungal spectrum and microtubule-stabilizing activity. Catalyzes the epoxidation of epothilones C and D to epothilones A and B, respectively. The protein is Epothilone C/D epoxidase (cyp167A1) of Sorangium cellulosum (Polyangium cellulosum).